A 235-amino-acid polypeptide reads, in one-letter code: Secretory carrier-associated membrane protein 5B (235 aa).

Topologically, residues methionine 1–arginine 39 are cytoplasmic. A helical membrane pass occupies residues leucine 40–alanine 60. Residues tryptophan 61–glycine 67 are Extracellular-facing. The chain crosses the membrane as a helical span at residues alanine 68 to cysteine 88. The Cytoplasmic segment spans residues tryptophan 89–serine 102. The helical transmembrane segment at phenylalanine 103–glycine 125 threads the bilayer. Over isoleucine 126–alanine 148 the chain is Extracellular. The chain crosses the membrane as a helical span at residues valine 149–leucine 169. Over threonine 170 to methionine 235 the chain is Cytoplasmic.

This sequence belongs to the SCAMP family. SCAMP5 subfamily.

It localises to the cell membrane. Its subcellular location is the golgi apparatus membrane. The protein resides in the golgi apparatus. It is found in the trans-Golgi network membrane. The protein localises to the recycling endosome membrane. It localises to the cytoplasmic vesicle. Its subcellular location is the secretory vesicle. The protein resides in the synaptic vesicle membrane. Required for the calcium-dependent exocytosis of signal sequence-containing cytokines. Probably acts in cooperation with the SNARE machinery. This Xenopus laevis (African clawed frog) protein is Secretory carrier-associated membrane protein 5B (scamp5-b).